The chain runs to 441 residues: Ribosomal protein uS12 methylthiotransferase RimO (441 aa).

The MTTase N-terminal domain maps to P7–P117. Positions 16, 52, 81, 148, 152, and 155 each coordinate [4Fe-4S] cluster. In terms of domain architecture, Radical SAM core spans L134–R371. In terms of domain architecture, TRAM spans K374 to G440.

It belongs to the methylthiotransferase family. RimO subfamily. Requires [4Fe-4S] cluster as cofactor.

The protein localises to the cytoplasm. It carries out the reaction L-aspartate(89)-[ribosomal protein uS12]-hydrogen + (sulfur carrier)-SH + AH2 + 2 S-adenosyl-L-methionine = 3-methylsulfanyl-L-aspartate(89)-[ribosomal protein uS12]-hydrogen + (sulfur carrier)-H + 5'-deoxyadenosine + L-methionine + A + S-adenosyl-L-homocysteine + 2 H(+). Functionally, catalyzes the methylthiolation of an aspartic acid residue of ribosomal protein uS12. This is Ribosomal protein uS12 methylthiotransferase RimO from Bradyrhizobium sp. (strain BTAi1 / ATCC BAA-1182).